The primary structure comprises 386 residues: Protein phosphatase methylesterase 1 (386 aa).

A disordered region spans residues 20–48; sequence ILEKLKGGQEPNSNEEGSDSIGDLPSLKN. Residues Ser-194, Asp-222, and His-348 contribute to the active site.

Belongs to the AB hydrolase superfamily.

It catalyses the reaction [phosphatase 2A protein]-C-terminal L-leucine methyl ester + H2O = [phosphatase 2A protein]-C-terminal L-leucine + methanol + H(+). Demethylates proteins that have been reversibly carboxymethylated. Demethylates the phosphatase PP2A catalytic subunit. This chain is Protein phosphatase methylesterase 1 (PPE1), found in Candida glabrata (strain ATCC 2001 / BCRC 20586 / JCM 3761 / NBRC 0622 / NRRL Y-65 / CBS 138) (Yeast).